We begin with the raw amino-acid sequence, 332 residues long: tRNA N6-adenosine threonylcarbamoyltransferase (332 aa).

Fe cation-binding residues include histidine 108 and histidine 112. Substrate is bound by residues 129–133 (LISGG), aspartate 161, glutamate 178, and serine 258. Aspartate 286 serves as a coordination point for Fe cation.

Belongs to the KAE1 / TsaD family. Requires Fe(2+) as cofactor.

The protein localises to the cytoplasm. The catalysed reaction is L-threonylcarbamoyladenylate + adenosine(37) in tRNA = N(6)-L-threonylcarbamoyladenosine(37) in tRNA + AMP + H(+). Its function is as follows. Required for the formation of a threonylcarbamoyl group on adenosine at position 37 (t(6)A37) in tRNAs that read codons beginning with adenine. Is probably involved in the transfer of the threonylcarbamoyl moiety of threonylcarbamoyl-AMP (TC-AMP) to the N6 group of A37. The sequence is that of tRNA N6-adenosine threonylcarbamoyltransferase from Pyrobaculum arsenaticum (strain DSM 13514 / JCM 11321 / PZ6).